Consider the following 454-residue polypeptide: tRNA modification GTPase MnmE (454 aa).

(6S)-5-formyl-5,6,7,8-tetrahydrofolate contacts are provided by Arg-23, Glu-80, and Lys-120. The 162-residue stretch at 216–377 (GMKVVIAGRP…LRDHLKQSMG (162 aa)) folds into the TrmE-type G domain. Asn-226 is a K(+) binding site. GTP contacts are provided by residues 226-231 (NAGKSS), 245-251 (TDIAGTT), 270-273 (DTAG), 335-338 (NKAD), and 358-360 (SAR). Ser-230 contacts Mg(2+). Thr-245, Ile-247, and Thr-250 together coordinate K(+). Mg(2+) is bound at residue Thr-251. Lys-454 provides a ligand contact to (6S)-5-formyl-5,6,7,8-tetrahydrofolate.

The protein belongs to the TRAFAC class TrmE-Era-EngA-EngB-Septin-like GTPase superfamily. TrmE GTPase family. As to quaternary structure, homodimer. Heterotetramer of two MnmE and two MnmG subunits. Requires K(+) as cofactor.

It is found in the cytoplasm. In terms of biological role, exhibits a very high intrinsic GTPase hydrolysis rate. Involved in the addition of a carboxymethylaminomethyl (cmnm) group at the wobble position (U34) of certain tRNAs, forming tRNA-cmnm(5)s(2)U34. The protein is tRNA modification GTPase MnmE of Yersinia pseudotuberculosis serotype O:1b (strain IP 31758).